The chain runs to 1179 residues: Protein turtle homolog A (1179 aa).

The N-terminal stretch at 1–20 (MIWCLRLTILSLILSQGADG) is a signal peptide. The Extracellular segment spans residues 21–734 (RRKPEVVSVV…TQLPGLLPQP (714 aa)). Ig-like domains are found at residues 24 to 124 (PEVV…DFAN), 136 to 216 (PQFQ…GSVT), 226 to 318 (PPVI…AYLT), 322 to 410 (PAQV…SPVT), and 418 to 498 (PAFI…VTIS). Intrachain disulfides connect C41/C108, C158/C206, C248/C301, C344/C395, and C440/C486. N-linked (GlcNAc...) asparagine glycosylation occurs at N188. 2 Fibronectin type-III domains span residues 507-611 (SPHV…TTPA) and 623-718 (PLSP…TSGL). 2 N-linked (GlcNAc...) asparagine glycosylation sites follow: N513 and N524. A helical transmembrane segment spans residues 735–755 (VLAGVVGGVCFLGVAVLVSIL). Over 756 to 1179 (AACLMNRRRA…ISYPEQATLL (424 aa)) the chain is Cytoplasmic. A disordered region spans residues 766 to 807 (ARRHRKRLRQDPPLIFSPRGRSGPHSAPGSDSPDSVTKFKLQ). S809 bears the Phosphoserine mark. 4 disordered regions span residues 819-846 (LWGEPARPPSPHPDSPLGRGPLPLEPIC), 869-895 (ERSEPRTSAKRLAQSLDCSSSSPSGVP), 942-979 (PPLEEPTPASPPDFMGSHPCPTSSFLPPPDSPPTNLRA), and 1016-1079 (APRG…KRRN). Positions 884–893 (LDCSSSSPSG) are enriched in polar residues. Positions 1020 to 1029 (SLTSQSSGRG) are enriched in polar residues. The PDZ-binding motif lies at 1177–1179 (TLL).

Belongs to the immunoglobulin superfamily. Turtle family. Interacts with SHANK1 and probably with MAGI2. In terms of tissue distribution, expressed in hippocampal neurons (at protein level).

It is found in the cell membrane. It localises to the synapse. Its function is as follows. Functions in dendrite outgrowth and synapse maturation. The sequence is that of Protein turtle homolog A (Igsf9) from Rattus norvegicus (Rat).